A 174-amino-acid chain; its full sequence is uncharacterized protein (174 aa).

Positions R153–G174 are disordered.

This is an uncharacterized protein from Sinorhizobium fredii (strain NBRC 101917 / NGR234).